The following is a 249-amino-acid chain: 2,3-bisphosphoglycerate-dependent phosphoglycerate mutase (249 aa).

Substrate contacts are provided by residues 9–16 (RHGQSQWN), 22–23 (TG), Arg-61, 88–91 (ERHY), Lys-99, 115–116 (RR), and 184–185 (GN). The Tele-phosphohistidine intermediate role is filled by His-10. Glu-88 functions as the Proton donor/acceptor in the catalytic mechanism.

It belongs to the phosphoglycerate mutase family. BPG-dependent PGAM subfamily. As to quaternary structure, homodimer.

The enzyme catalyses (2R)-2-phosphoglycerate = (2R)-3-phosphoglycerate. It functions in the pathway carbohydrate degradation; glycolysis; pyruvate from D-glyceraldehyde 3-phosphate: step 3/5. Its function is as follows. Catalyzes the interconversion of 2-phosphoglycerate and 3-phosphoglycerate. The polypeptide is 2,3-bisphosphoglycerate-dependent phosphoglycerate mutase (Xylella fastidiosa (strain 9a5c)).